Here is a 412-residue protein sequence, read N- to C-terminus: Short-chain specific acyl-CoA dehydrogenase, mitochondrial (412 aa).

Residues 1 to 24 constitute a mitochondrion transit peptide; it reads MAAALLARARGPLRRALGVRDWRR. Position 27 is a phosphothreonine (Thr27). The residue at position 51 (Lys51) is an N6-acetyllysine; alternate. The residue at position 51 (Lys51) is an N6-succinyllysine; alternate. Lys72 is modified (N6-acetyllysine). Lys129 bears the N6-acetyllysine; alternate mark. Lys129 is modified (N6-succinyllysine; alternate). FAD contacts are provided by residues 152–161 and 185–187; these read FALSEPGNGS and WIT. A substrate-binding site is contributed by Ser161. Residue Lys208 is modified to N6-acetyllysine. Lys262 is subject to N6-acetyllysine; alternate. At Lys262 the chain carries N6-succinyllysine; alternate. Position 269–272 (269–272) interacts with substrate; it reads DMGR. The residue at position 292 (Lys292) is an N6-acetyllysine. Arg297 is an FAD binding site. Residue Lys306 is modified to N6-acetyllysine; alternate. Lys306 carries the post-translational modification N6-succinyllysine; alternate. FAD-binding positions include Gln308 and 365–369; that span reads QILGG. Residue Glu392 is the Proton acceptor of the active site. Position 393 (Gly393) interacts with substrate. Residue 394–396 participates in FAD binding; it reads TSE.

The protein belongs to the acyl-CoA dehydrogenase family. Homotetramer. The cofactor is FAD.

The protein resides in the mitochondrion matrix. It carries out the reaction a short-chain 2,3-saturated fatty acyl-CoA + oxidized [electron-transfer flavoprotein] + H(+) = a short-chain (2E)-enoyl-CoA + reduced [electron-transfer flavoprotein]. The enzyme catalyses butanoyl-CoA + oxidized [electron-transfer flavoprotein] + H(+) = (2E)-butenoyl-CoA + reduced [electron-transfer flavoprotein]. The catalysed reaction is pentanoyl-CoA + oxidized [electron-transfer flavoprotein] + H(+) = (2E)-pentenoyl-CoA + reduced [electron-transfer flavoprotein]. It catalyses the reaction hexanoyl-CoA + oxidized [electron-transfer flavoprotein] + H(+) = (2E)-hexenoyl-CoA + reduced [electron-transfer flavoprotein]. The protein operates within lipid metabolism; mitochondrial fatty acid beta-oxidation. In terms of biological role, short-chain specific acyl-CoA dehydrogenase is one of the acyl-CoA dehydrogenases that catalyze the first step of mitochondrial fatty acid beta-oxidation, an aerobic process breaking down fatty acids into acetyl-CoA and allowing the production of energy from fats. The first step of fatty acid beta-oxidation consists in the removal of one hydrogen from C-2 and C-3 of the straight-chain fatty acyl-CoA thioester, resulting in the formation of trans-2-enoyl-CoA. Among the different mitochondrial acyl-CoA dehydrogenases, short-chain specific acyl-CoA dehydrogenase acts specifically on acyl-CoAs with saturated 4 to 6 carbons long primary chains. The protein is Short-chain specific acyl-CoA dehydrogenase, mitochondrial (Acads) of Mus musculus (Mouse).